We begin with the raw amino-acid sequence, 381 residues long: Dual-specificity RNA methyltransferase RlmN (381 aa).

Residue E95 is the Proton acceptor of the active site. A Radical SAM core domain is found at 101–347 (EDDRGTLCVS…TTVRKTRGDD (247 aa)). Residues C108 and C352 are joined by a disulfide bond. [4Fe-4S] cluster-binding residues include C115, C119, and C122. S-adenosyl-L-methionine is bound by residues 178–179 (GE), S210, 232–234 (SLH), and N309. C352 acts as the S-methylcysteine intermediate in catalysis.

It belongs to the radical SAM superfamily. RlmN family. Requires [4Fe-4S] cluster as cofactor.

It is found in the cytoplasm. The catalysed reaction is adenosine(2503) in 23S rRNA + 2 reduced [2Fe-2S]-[ferredoxin] + 2 S-adenosyl-L-methionine = 2-methyladenosine(2503) in 23S rRNA + 5'-deoxyadenosine + L-methionine + 2 oxidized [2Fe-2S]-[ferredoxin] + S-adenosyl-L-homocysteine. It carries out the reaction adenosine(37) in tRNA + 2 reduced [2Fe-2S]-[ferredoxin] + 2 S-adenosyl-L-methionine = 2-methyladenosine(37) in tRNA + 5'-deoxyadenosine + L-methionine + 2 oxidized [2Fe-2S]-[ferredoxin] + S-adenosyl-L-homocysteine. In terms of biological role, specifically methylates position 2 of adenine 2503 in 23S rRNA and position 2 of adenine 37 in tRNAs. m2A2503 modification seems to play a crucial role in the proofreading step occurring at the peptidyl transferase center and thus would serve to optimize ribosomal fidelity. This chain is Dual-specificity RNA methyltransferase RlmN, found in Bordetella petrii (strain ATCC BAA-461 / DSM 12804 / CCUG 43448).